The primary structure comprises 134 residues: Large-conductance mechanosensitive channel (134 aa).

2 helical membrane passes run 16-36 and 84-104; these read VIDL…VTAL and INTL…IKVI.

Belongs to the MscL family. As to quaternary structure, homopentamer.

It localises to the cell inner membrane. Its function is as follows. Channel that opens in response to stretch forces in the membrane lipid bilayer. May participate in the regulation of osmotic pressure changes within the cell. The polypeptide is Large-conductance mechanosensitive channel (Stenotrophomonas maltophilia (strain R551-3)).